The sequence spans 1596 residues: SET-binding protein (1596 aa).

Residues 1 to 12 (MESRETLSSSRQ) show a composition bias toward polar residues. Disordered regions lie at residues 1–83 (MESR…WVAG), 134–426 (KQSG…SIKA), and 475–518 (SPSV…SRKL). The segment covering 64–81 (GSGRDVDSNSNADSEKWV) has biased composition (basic and acidic residues). Positions 164 to 175 (LTASDLAASDLK) are enriched in low complexity. 2 stretches are compositionally biased toward polar residues: residues 213–236 (KSSSQNHMDWSTNSDSGPVTQNCF) and 270–282 (AGNTWSQLSNNNK). Positions 290-306 (APSPSSHSSPAPPSSSA) are enriched in low complexity. The span at 363-372 (DNTEGKREGY) shows a compositional bias: basic and acidic residues. Over residues 375 to 395 (DSAQEASPARQNVSSASNPEN) the composition is skewed to polar residues. A DNA-binding region (a.T hook 1) is located at residues 584 to 596 (KKKRGRPKKQPLL). Disordered stretches follow at residues 604–624 (GTSTSPVSPISREFPGTKKRK), 722–763 (YIGK…AVPS), and 777–796 (HPLSTQLGGSNGNLSPASTE). Over residues 779–796 (LSTQLGGSNGNLSPASTE) the composition is skewed to polar residues. K817 is modified (N6-acetyllysine). The segment covering 854-880 (SPVSESHSEETIPSDSGIGTDNNSTSD) has biased composition (polar residues). A disordered region spans residues 854–889 (SPVSESHSEETIPSDSGIGTDNNSTSDQAEKSSESR). A DNA-binding region (a.T hook 2) is located at residues 1016–1028 (KKKRGRPAKTNDT). 6 disordered regions span residues 1134 to 1164 (PPKVGSASLSSGRLHKRKHKHKHKHKEDRIL), 1202 to 1225 (EKNKHKEKQKHQHSEAGHKASKNN), 1245 to 1300 (AKEK…GSKR), 1325 to 1344 (SSYDSSMSPGMPSPHLKVDQ), 1440 to 1473 (QRQSKTGNNFVKKRRGRPRKQPTQFDEDSRDQMP), and 1518 to 1596 (EAPP…EVLP). Over residues 1146–1159 (RLHKRKHKHKHKHK) the composition is skewed to basic residues. Over residues 1450-1459 (VKKRRGRPRK) the composition is skewed to basic residues. A DNA-binding region (a.T hook 3) is located at residues 1451-1463 (KKRRGRPRKQPTQ). 3 repeat units span residues 1520-1527 (PPLPPPPP), 1528-1535 (PPLPPPPP), and 1536-1543 (PPLPPPPP). Positions 1520-1543 (PPLPPPPPPPLPPPPPPPLPPPPP) are 3 X 8 AA tandem repeats of P-P-L-P-P-P-P-P. 2 stretches are compositionally biased toward pro residues: residues 1520–1546 (PPLPPPPPPPLPPPPPPPLPPPPPLPK) and 1560–1572 (PAQPPQQSPPQQP).

In terms of assembly, interacts with SET. In terms of tissue distribution, expressed in numerous tissues. Expressed at low levels in myeloid and monocytic cells as well as in CD34+ cells; expression levels are higher in myeloid malignancies.

It localises to the nucleus. The polypeptide is SET-binding protein (SETBP1) (Homo sapiens (Human)).